A 213-amino-acid chain; its full sequence is RxLR effector protein PexRD1 (213 aa).

The signal sequence occupies residues 1–19 (MRACNTLLPTAIVLTSCDA). The RxLR-dEER signature appears at 50 to 77 (RQLRGFYATENTDPVNNQDTAHEDGEER).

It belongs to the RxLR effector family.

The protein localises to the secreted. It localises to the host nucleus. In terms of biological role, effector that enhances P.infestans colonization of Nicotiana benthamiana leaves. The chain is RxLR effector protein PexRD1 from Phytophthora infestans (strain T30-4) (Potato late blight agent).